Consider the following 212-residue polypeptide: Ribonuclease HII (212 aa).

Positions 28–212 (SIIAGVDEVG…KSFAPIRQVV (185 aa)) constitute an RNase H type-2 domain. A divalent metal cation is bound by residues Asp34, Glu35, and Asp127.

Belongs to the RNase HII family. Mn(2+) is required as a cofactor. Requires Mg(2+) as cofactor.

It localises to the cytoplasm. The enzyme catalyses Endonucleolytic cleavage to 5'-phosphomonoester.. Its function is as follows. Endonuclease that specifically degrades the RNA of RNA-DNA hybrids. This chain is Ribonuclease HII, found in Chlamydia caviae (strain ATCC VR-813 / DSM 19441 / 03DC25 / GPIC) (Chlamydophila caviae).